The following is a 437-amino-acid chain: Epsilon-sarcoglycan (437 aa).

At 1 to 317 (MLLFWWWELG…LKSRDYYTDF (317 aa)) the chain is on the extracellular side. N-linked (GlcNAc...) asparagine glycosylation occurs at asparagine 200. Residues 318–338 (LVTLAVPSAVALVLFLILAYI) form a helical membrane-spanning segment. Residues 339-437 (MCCRREGVEK…QQQTTGKWYP (99 aa)) lie on the Cytoplasmic side of the membrane.

Belongs to the sarcoglycan alpha/epsilon family. Post-translationally, N-glycosylated. Ubiquitinated, leading to its degradation by the proteasome. As to expression, in both neural tissues including cerebellar cortex, striatum, cerebral cortex, thalamus and hippocampus, and non-neural tissues including quadriceps muscle, liver, kidney, spleen, lung, testis and heart. Widely distributed in the brain, with a robust signal obtained from regions with dense neuronal packing such as the pyramidal cell layer of the hippocampus, cerebellar molecular layer, and cerebral cortex. Levels are highest in kidney, moderate in brain and lung, and low in skeletal muscle, liver, spleen and testis.

It localises to the cell membrane. The protein resides in the sarcolemma. Its subcellular location is the cytoplasm. It is found in the cytoskeleton. The protein localises to the cell projection. It localises to the dendrite. The protein resides in the golgi apparatus. Component of the sarcoglycan complex, a subcomplex of the dystrophin-glycoprotein complex which forms a link between the F-actin cytoskeleton and the extracellular matrix. The protein is Epsilon-sarcoglycan of Rattus norvegicus (Rat).